The sequence spans 550 residues: Chaperonin GroEL (550 aa).

Residues 30-33 (TLGP), Lys51, 87-91 (DGTTT), Gly415, 479-481 (NAA), and Asp495 each bind ATP.

It belongs to the chaperonin (HSP60) family. In terms of assembly, forms a cylinder of 14 subunits composed of two heptameric rings stacked back-to-back. Interacts with the co-chaperonin GroES.

It localises to the cytoplasm. The enzyme catalyses ATP + H2O + a folded polypeptide = ADP + phosphate + an unfolded polypeptide.. In terms of biological role, together with its co-chaperonin GroES, plays an essential role in assisting protein folding. The GroEL-GroES system forms a nano-cage that allows encapsulation of the non-native substrate proteins and provides a physical environment optimized to promote and accelerate protein folding. This Burkholderia mallei (strain NCTC 10247) protein is Chaperonin GroEL.